A 346-amino-acid polypeptide reads, in one-letter code: tRNA N6-adenosine threonylcarbamoyltransferase (346 aa).

Positions 111 and 115 each coordinate Fe cation. Residues leucine 134–glycine 138, aspartate 167, glycine 180, and asparagine 277 contribute to the substrate site. Aspartate 305 lines the Fe cation pocket.

It belongs to the KAE1 / TsaD family. It depends on Fe(2+) as a cofactor.

The protein resides in the cytoplasm. It catalyses the reaction L-threonylcarbamoyladenylate + adenosine(37) in tRNA = N(6)-L-threonylcarbamoyladenosine(37) in tRNA + AMP + H(+). Its function is as follows. Required for the formation of a threonylcarbamoyl group on adenosine at position 37 (t(6)A37) in tRNAs that read codons beginning with adenine. Is involved in the transfer of the threonylcarbamoyl moiety of threonylcarbamoyl-AMP (TC-AMP) to the N6 group of A37, together with TsaE and TsaB. TsaD likely plays a direct catalytic role in this reaction. This is tRNA N6-adenosine threonylcarbamoyltransferase from Bordetella bronchiseptica (strain ATCC BAA-588 / NCTC 13252 / RB50) (Alcaligenes bronchisepticus).